Reading from the N-terminus, the 74-residue chain is ATP synthase subunit c (74 aa).

2 consecutive transmembrane segments (helical) span residues 13-33 and 51-71; these read ISVI…ASLI and ILGF…AFLI.

This sequence belongs to the ATPase C chain family. As to quaternary structure, F-type ATPases have 2 components, F(1) - the catalytic core - and F(0) - the membrane proton channel. F(1) has five subunits: alpha(3), beta(3), gamma(1), delta(1), epsilon(1). F(0) has three main subunits: a(1), b(2) and c(10-14). The alpha and beta chains form an alternating ring which encloses part of the gamma chain. F(1) is attached to F(0) by a central stalk formed by the gamma and epsilon chains, while a peripheral stalk is formed by the delta and b chains.

It localises to the cell inner membrane. F(1)F(0) ATP synthase produces ATP from ADP in the presence of a proton or sodium gradient. F-type ATPases consist of two structural domains, F(1) containing the extramembraneous catalytic core and F(0) containing the membrane proton channel, linked together by a central stalk and a peripheral stalk. During catalysis, ATP synthesis in the catalytic domain of F(1) is coupled via a rotary mechanism of the central stalk subunits to proton translocation. Its function is as follows. Key component of the F(0) channel; it plays a direct role in translocation across the membrane. A homomeric c-ring of between 10-14 subunits forms the central stalk rotor element with the F(1) delta and epsilon subunits. This chain is ATP synthase subunit c, found in Granulibacter bethesdensis (strain ATCC BAA-1260 / CGDNIH1).